A 613-amino-acid chain; its full sequence is Kelch-like protein 21 (613 aa).

One can recognise a BTB domain in the interval 38-105 (FDVTLCAEGK…CYTGRVTVTH (68 aa)). One can recognise a BACK domain in the interval 140–242 (CLEIQDFAEA…RRFYLLAHVE (103 aa)). Kelch repeat units follow at residues 289 to 337 (ILVV…ALGN), 338 to 384 (DIYV…VLKG), 386 to 424 (LYVVGSDSTERYDHTIDCWEALPPMPHPMDNCSTTACRG), 426 to 472 (LYAI…TLNG), 474 to 514 (IYFV…ALGG), and 515 to 562 (RLYV…SIFR).

In terms of assembly, component of the BCR(KLHL21) E3 ubiquitin ligase complex, at least composed of cul3, klhl21 and rbx1.

Its subcellular location is the cytoplasm. It localises to the cytoskeleton. It is found in the spindle. It functions in the pathway protein modification; protein ubiquitination. Its function is as follows. Substrate-specific adapter of BCR (BTB-CUL3-RBX1) E3 ubiquitin-protein ligase complex required for efficient chromosome alignment and cytokinesis. The BCR(KLHL21) E3 ubiquitin ligase complex regulates localization of the chromosomal passenger complex (CPC) from chromosomes to the spindle midzone in anaphase and mediates the ubiquitination of AURKB. The sequence is that of Kelch-like protein 21 (klhl21) from Danio rerio (Zebrafish).